The following is a 337-amino-acid chain: DNA-directed RNA polymerase subunit alpha (337 aa).

An alpha N-terminal domain (alpha-NTD) region spans residues methionine 1–glutamate 233. The alpha C-terminal domain (alpha-CTD) stretch occupies residues phenylalanine 249 to tyrosine 337.

The protein belongs to the RNA polymerase alpha chain family. In terms of assembly, homodimer. The RNAP catalytic core consists of 2 alpha, 1 beta, 1 beta' and 1 omega subunit. When a sigma factor is associated with the core the holoenzyme is formed, which can initiate transcription.

The catalysed reaction is RNA(n) + a ribonucleoside 5'-triphosphate = RNA(n+1) + diphosphate. In terms of biological role, DNA-dependent RNA polymerase catalyzes the transcription of DNA into RNA using the four ribonucleoside triphosphates as substrates. This is DNA-directed RNA polymerase subunit alpha from Brucella ovis (strain ATCC 25840 / 63/290 / NCTC 10512).